The chain runs to 400 residues: Tyrosine-specific transport system 1 (400 aa).

12 helical membrane-spanning segments follow: residues 5-25, 34-54, 80-100, 117-137, 143-163, 176-196, 211-231, 250-270, 273-293, 313-333, 335-355, and 370-390; these read VGST…AMPL, FTLV…LLFV, IIAT…YISG, VSVL…THSV, VLFF…LPEI, ALII…GSIP, FSIL…QLST, LNGL…ASAV, FSTL…LECI, LTFI…ILAL, YAGQ…VWKA, and NLTL…PFAI.

The protein belongs to the amino acid/polyamine transporter 2 family. Mtr/TnaB/TyrP permease subfamily.

It localises to the cell inner membrane. The enzyme catalyses L-tyrosine(in) + H(+)(in) = L-tyrosine(out) + H(+)(out). Transports tyrosine across the cytoplasmic membrane. The transport system is energized by the proton motive force. This chain is Tyrosine-specific transport system 1 (tyrP-A), found in Haemophilus influenzae (strain ATCC 51907 / DSM 11121 / KW20 / Rd).